Here is a 211-residue protein sequence, read N- to C-terminus: Uracil phosphoribosyltransferase (211 aa).

5-phospho-alpha-D-ribose 1-diphosphate-binding positions include Arg79, Arg104, and 131 to 139 (DPMLATGGS). Uracil contacts are provided by residues Ile196 and 201-203 (GDA). Asp202 serves as a coordination point for 5-phospho-alpha-D-ribose 1-diphosphate.

It belongs to the UPRTase family. It depends on Mg(2+) as a cofactor.

The catalysed reaction is UMP + diphosphate = 5-phospho-alpha-D-ribose 1-diphosphate + uracil. It functions in the pathway pyrimidine metabolism; UMP biosynthesis via salvage pathway; UMP from uracil: step 1/1. With respect to regulation, allosterically activated by GTP. In terms of biological role, catalyzes the conversion of uracil and 5-phospho-alpha-D-ribose 1-diphosphate (PRPP) to UMP and diphosphate. This Limosilactobacillus reuteri (strain DSM 20016) (Lactobacillus reuteri) protein is Uracil phosphoribosyltransferase.